A 342-amino-acid polypeptide reads, in one-letter code: Lipase B (342 aa).

The first 18 residues, Met1 to Ala18, serve as a signal peptide directing secretion. Residues Ala19–Arg25 constitute a propeptide that is removed on maturation. Cys47 and Cys89 are oxidised to a cystine. Residue Asn99 is glycosylated (N-linked (GlcNAc...) asparagine). Residues Ser130, Asp212, and His249 contribute to the active site. 2 disulfides stabilise this stretch: Cys241/Cys283 and Cys318/Cys336.

The catalysed reaction is a triacylglycerol + H2O = a diacylglycerol + a fatty acid + H(+). Hydrolysis of triglycerides. Is very stereospecific both in hydrolysis and in organic synthesis and has a potentially important application in glucolipid synthesis. This is Lipase B from Pseudozyma antarctica (Yeast).